Consider the following 72-residue polypeptide: SRY-related protein MG42 (72 aa).

The HMG box DNA-binding region spans 1-69; sequence VKRPMNAFMV…KHMADYPNYK (69 aa).

Its subcellular location is the nucleus. This chain is SRY-related protein MG42, found in Tarentola mauritanica (Common wall gecko).